The following is a 42-amino-acid chain: Photosystem I reaction center subunit IX (42 aa).

A helical transmembrane segment spans residues 7–27; it reads FLSTAPVLIMALLTFTAGLLI.

Belongs to the PsaJ family.

The protein resides in the cellular thylakoid membrane. Its function is as follows. May help in the organization of the PsaE and PsaF subunits. The sequence is that of Photosystem I reaction center subunit IX from Rippkaea orientalis (strain PCC 8801 / RF-1) (Cyanothece sp. (strain PCC 8801)).